Consider the following 139-residue polypeptide: Small ribosomal subunit protein bS6 (139 aa).

Positions Thr97–Glu139 are disordered. Residues Lys104–Glu139 show a composition bias toward basic and acidic residues.

The protein belongs to the bacterial ribosomal protein bS6 family.

In terms of biological role, binds together with bS18 to 16S ribosomal RNA. This chain is Small ribosomal subunit protein bS6, found in Shewanella sediminis (strain HAW-EB3).